A 231-amino-acid chain; its full sequence is 7-cyano-7-deazaguanine synthase (231 aa).

Phenylalanine 8–leucine 18 contacts ATP. Cysteine 188, cysteine 197, cysteine 200, and cysteine 203 together coordinate Zn(2+).

Belongs to the QueC family. The cofactor is Zn(2+).

It catalyses the reaction 7-carboxy-7-deazaguanine + NH4(+) + ATP = 7-cyano-7-deazaguanine + ADP + phosphate + H2O + H(+). Its pathway is purine metabolism; 7-cyano-7-deazaguanine biosynthesis. Its function is as follows. Catalyzes the ATP-dependent conversion of 7-carboxy-7-deazaguanine (CDG) to 7-cyano-7-deazaguanine (preQ(0)). This is 7-cyano-7-deazaguanine synthase from Salmonella arizonae (strain ATCC BAA-731 / CDC346-86 / RSK2980).